A 631-amino-acid polypeptide reads, in one-letter code: FAST kinase domain-containing protein 4 (631 aa).

A mitochondrion-targeting transit peptide spans 1–107 (MAAHLVKRCT…NQAAMVLIRL (107 aa)). Ser-553 carries the post-translational modification Phosphoserine. The RAP domain occupies 561 to 619 (LAFLRWEFPNFNSRSKDLLGRFVLARRHIVAAGFLIVDVPFYEWLELKSEWQKGAYLKD).

Belongs to the FAST kinase family. In terms of tissue distribution, ubiquitously expressed. Expression detected in spleen, thymus, testis, ovary, colon, heart, smooth muscle, kidney, brain, lung, liver and white adipose tissue with highest expression in smooth muscle.

Its subcellular location is the mitochondrion matrix. Its function is as follows. Plays a role in processing of mitochondrial RNA precursors and in stabilization of a subset of mature mitochondrial RNA species, such as MT-CO1, MT-CO2, MT-CYB, MT-CO3, MT-ND3, MT-ND5 and MT-ATP8/6. May play a role in cell cycle progression. The protein is FAST kinase domain-containing protein 4 of Homo sapiens (Human).